The chain runs to 272 residues: 4-hydroxy-tetrahydrodipicolinate reductase (272 aa).

NAD(+)-binding positions include 11-16 and Glu37; that span reads GVSGRM. Arg38 lines the NADP(+) pocket. NAD(+)-binding positions include 101-103 and 125-128; these read GTT and AGNM. The Proton donor/acceptor role is filled by His158. His159 lines the (S)-2,3,4,5-tetrahydrodipicolinate pocket. Lys162 acts as the Proton donor in catalysis. 168 to 169 serves as a coordination point for (S)-2,3,4,5-tetrahydrodipicolinate; it reads GT.

It belongs to the DapB family.

Its subcellular location is the cytoplasm. It catalyses the reaction (S)-2,3,4,5-tetrahydrodipicolinate + NAD(+) + H2O = (2S,4S)-4-hydroxy-2,3,4,5-tetrahydrodipicolinate + NADH + H(+). It carries out the reaction (S)-2,3,4,5-tetrahydrodipicolinate + NADP(+) + H2O = (2S,4S)-4-hydroxy-2,3,4,5-tetrahydrodipicolinate + NADPH + H(+). It participates in amino-acid biosynthesis; L-lysine biosynthesis via DAP pathway; (S)-tetrahydrodipicolinate from L-aspartate: step 4/4. Its function is as follows. Catalyzes the conversion of 4-hydroxy-tetrahydrodipicolinate (HTPA) to tetrahydrodipicolinate. In Roseobacter denitrificans (strain ATCC 33942 / OCh 114) (Erythrobacter sp. (strain OCh 114)), this protein is 4-hydroxy-tetrahydrodipicolinate reductase.